Here is a 347-residue protein sequence, read N- to C-terminus: Protein-glutamate methylesterase/protein-glutamine glutaminase 2 (347 aa).

The 118-residue stretch at 2-119 folds into the Response regulatory domain; that stretch reads RVMIVDDSAV…LGGADLYRKD (118 aa). 4-aspartylphosphate is present on Asp52. The disordered stretch occupies residues 131–153; sequence AARPAPPQAAPRPTLAPPSSDPA. The span at 134–150 shows a compositional bias: pro residues; sequence PAPPQAAPRPTLAPPSS. The 195-residue stretch at 152-346 folds into the CheB-type methylesterase domain; sequence PAGPIEAVVV…PYIASRARSV (195 aa). Active-site residues include Ser164, His191, and Asp288.

Belongs to the CheB family. Post-translationally, phosphorylated by CheA. Phosphorylation of the N-terminal regulatory domain activates the methylesterase activity.

It is found in the cytoplasm. The enzyme catalyses [protein]-L-glutamate 5-O-methyl ester + H2O = L-glutamyl-[protein] + methanol + H(+). It carries out the reaction L-glutaminyl-[protein] + H2O = L-glutamyl-[protein] + NH4(+). Involved in chemotaxis. Part of a chemotaxis signal transduction system that modulates chemotaxis in response to various stimuli. Catalyzes the demethylation of specific methylglutamate residues introduced into the chemoreceptors (methyl-accepting chemotaxis proteins or MCP) by CheR. Also mediates the irreversible deamidation of specific glutamine residues to glutamic acid. This is Protein-glutamate methylesterase/protein-glutamine glutaminase 2 from Caulobacter vibrioides (strain ATCC 19089 / CIP 103742 / CB 15) (Caulobacter crescentus).